Reading from the N-terminus, the 292-residue chain is Elongation factor Ts (292 aa).

Positions threonine 80–valine 83 are involved in Mg(2+) ion dislocation from EF-Tu.

It belongs to the EF-Ts family.

It localises to the cytoplasm. Its function is as follows. Associates with the EF-Tu.GDP complex and induces the exchange of GDP to GTP. It remains bound to the aminoacyl-tRNA.EF-Tu.GTP complex up to the GTP hydrolysis stage on the ribosome. The chain is Elongation factor Ts from Cupriavidus necator (strain ATCC 17699 / DSM 428 / KCTC 22496 / NCIMB 10442 / H16 / Stanier 337) (Ralstonia eutropha).